A 453-amino-acid chain; its full sequence is Pup--protein ligase (453 aa).

Glu9 is a Mg(2+) binding site. Arg53 lines the ATP pocket. Tyr55 lines the Mg(2+) pocket. Residue Asp57 is the Proton acceptor of the active site. A Mg(2+)-binding site is contributed by Glu63. The ATP site is built by Thr66 and Trp420.

Belongs to the Pup ligase/Pup deamidase family. Pup-conjugating enzyme subfamily.

The enzyme catalyses ATP + [prokaryotic ubiquitin-like protein]-L-glutamate + [protein]-L-lysine = ADP + phosphate + N(6)-([prokaryotic ubiquitin-like protein]-gamma-L-glutamyl)-[protein]-L-lysine.. The protein operates within protein degradation; proteasomal Pup-dependent pathway. Its pathway is protein modification; protein pupylation. Functionally, catalyzes the covalent attachment of the prokaryotic ubiquitin-like protein modifier Pup to the proteasomal substrate proteins, thereby targeting them for proteasomal degradation. This tagging system is termed pupylation. The ligation reaction involves the side-chain carboxylate of the C-terminal glutamate of Pup and the side-chain amino group of a substrate lysine. This is Pup--protein ligase from Streptomyces scabiei (strain 87.22).